The primary structure comprises 339 residues: tRNA-splicing endonuclease (339 aa).

Active-site residues include Tyr-274, His-285, and Lys-316.

It belongs to the tRNA-intron endonuclease family. Archaeal long subfamily. As to quaternary structure, homodimer. The cofactor is Ca(2+). Requires Mg(2+) as cofactor. The N-terminus is blocked.

It carries out the reaction pretRNA = a 3'-half-tRNA molecule with a 5'-OH end + a 5'-half-tRNA molecule with a 2',3'-cyclic phosphate end + an intron with a 2',3'-cyclic phosphate and a 5'-hydroxyl terminus.. Its function is as follows. Endonuclease that removes tRNA introns. Cleaves pre-tRNA at the 5'- and 3'-splice sites to release the intron. The products are an intron and two tRNA half-molecules bearing 2',3' cyclic phosphate and 5'-OH termini. Recognizes a pseudosymmetric substrate in which 2 bulged loops of 3 bases are separated by a stem of 4 bp. The protein is tRNA-splicing endonuclease of Haloferax volcanii (strain ATCC 29605 / DSM 3757 / JCM 8879 / NBRC 14742 / NCIMB 2012 / VKM B-1768 / DS2) (Halobacterium volcanii).